The following is a 219-amino-acid chain: Dephospho-CoA kinase (219 aa).

A DPCK domain is found at 8-215; sequence LVGVTGGIGS…EAAASGPDCQ (208 aa). 16-21 is a binding site for ATP; sequence GSGKST.

The protein belongs to the CoaE family.

Its subcellular location is the cytoplasm. The catalysed reaction is 3'-dephospho-CoA + ATP = ADP + CoA + H(+). The protein operates within cofactor biosynthesis; coenzyme A biosynthesis; CoA from (R)-pantothenate: step 5/5. Its function is as follows. Catalyzes the phosphorylation of the 3'-hydroxyl group of dephosphocoenzyme A to form coenzyme A. This Chlorobium luteolum (strain DSM 273 / BCRC 81028 / 2530) (Pelodictyon luteolum) protein is Dephospho-CoA kinase.